We begin with the raw amino-acid sequence, 152 residues long: Transcriptional regulator MraZ (152 aa).

SpoVT-AbrB domains are found at residues 5 to 52 (ASAI…PLDE) and 81 to 124 (AHEC…DEAA).

Belongs to the MraZ family. As to quaternary structure, forms oligomers.

It is found in the cytoplasm. The protein resides in the nucleoid. The protein is Transcriptional regulator MraZ of Shewanella violacea (strain JCM 10179 / CIP 106290 / LMG 19151 / DSS12).